A 256-amino-acid polypeptide reads, in one-letter code: Thiazole synthase (256 aa).

Catalysis depends on lysine 97, which acts as the Schiff-base intermediate with DXP. Residues glycine 158, 184-185 (AG), and 206-207 (NT) contribute to the 1-deoxy-D-xylulose 5-phosphate site.

It belongs to the ThiG family. Homotetramer. Forms heterodimers with either ThiH or ThiS.

It is found in the cytoplasm. It catalyses the reaction [ThiS sulfur-carrier protein]-C-terminal-Gly-aminoethanethioate + 2-iminoacetate + 1-deoxy-D-xylulose 5-phosphate = [ThiS sulfur-carrier protein]-C-terminal Gly-Gly + 2-[(2R,5Z)-2-carboxy-4-methylthiazol-5(2H)-ylidene]ethyl phosphate + 2 H2O + H(+). The protein operates within cofactor biosynthesis; thiamine diphosphate biosynthesis. Catalyzes the rearrangement of 1-deoxy-D-xylulose 5-phosphate (DXP) to produce the thiazole phosphate moiety of thiamine. Sulfur is provided by the thiocarboxylate moiety of the carrier protein ThiS. In vitro, sulfur can be provided by H(2)S. The chain is Thiazole synthase from Flavobacterium psychrophilum (strain ATCC 49511 / DSM 21280 / CIP 103535 / JIP02/86).